Reading from the N-terminus, the 3828-residue chain is MGRSKFPGNPSKSINRKRISVLQLEDEAASAAAAAAAATAATTEQHQQSEQSAGSSASREKGNNCDNDDDDNAPSGAATSGNRGASSGASDAAPEGGNSYGNGSSTGSKTTNGGNVNGGSHHKSATAPAELKECKNQGNQIEPNNCIAAEPDGTEDTNNDDDDDSSNDKKPTAAAAAAAAAAFVPGPSALQRARKGGNKKFKNLNLARPEVMLPSTSKLKQQQQQQLQLNCPSASASSLSSSAAAAAAAAAPTTTTTTASASATLTATATSTSTSSLPGTPLSVIAGGGGGAAAAALLLANPFASVETKVVEVNAAATAAATAAATAAAGAGEDVGMLKASIEMANEAGLEAPAVAVKSSGSSPNPNHNPNAVAGSTSAAAPGAPTATKQKKTVTFKNILETSDDKSVVKRFYNPDNRVPLVSIMKKDSLNRPLNYCRGSEFIVRPSILSKILNKNSNIDKLNSLKFRSVHASSNSIQESSSSTTNLFGSGLSRAFGAPIDDEDAVSGGVTFRKQEPQHKTPEDNDDDGSASSDAIEDDEDIDDDDAEENEEAASEKSAETTASVDEKEADDRQLVMDKHFVLPKRSTRSSRIIKPNKRLLEVGGICSKRSPSDANGKPKPKNYFGLATLPAKCTPRRRRSAATALSQKLGKETFASFATAKVNSSFVLRQPRLQFQTDKSRSFVSAKPTLPTTTVLPASSSAITSANVLSFGALNNANSAVAAASTCAVCSAPVNNKDAPLARKYGVIACEVCRKFNSRMTKISKLSTPMHSNPSTSTAQSGQQLKCTDGGNCSILSLKSQLKNFKKLYKERCKACWLKKCLATLQLPAGHRSRLSAILPASMREEVAPKDDKCPELLSPTASLRFTAPTSSASSGTTIKWKSSAETAVNSIKSNPLAENNVTFGGTPLLRPAILEKPLFLKIGSDNKKAKESKEALGLSPVPSTSEAAVAPGKTTRKAKQDKEKARELEAEKPLSPNAKKTTEANTPETQKDEQPASTTTTVSAASSSTSHTSSAATNSSQLETTEAANASAVPDNLKRQRIDLKGPRVKHVCRSASIVLGQPLATFGDEEEELAAAEAGPAPTTTTTTTSPEVIIKKPKSPQPMQMIIDENDNCASCILTPTEATAEAQPAVKSVLESRSSKSNTQTEAKKTPATSGSSKGKVTTRNATATVTSVASSLVATKKQRNIEVSSSISSSQAAATQSRRALAKEVNRLKALISIDFWENYDPAEVCQTGFGLIVTETVAQRALCFLCGSTGLDPLIFCACCCEPYHQYCVLDEYNLKHSSFEDTLMTSLLETSNNACAISAATNTALNQLTQRLNWLCPRCTVCYTCNMSSGSKVKCQKCQKNYHSTCLGTSKRLLGADRPLICVNCLKCKSCATTKVSKFVGNLPMCTACFKLRKKGNFCPICQKCYDDNDFDLKMMECGDCNQWVHSKCEGLSDEQYNLLSTLPESIEFICKKCARRCDVSRNKADEWRQAVMEEFKSSLYSVLKLLSKSRQACALLKLSPRKNWRCCSAGAQPAKAHSQGKLQPKALQFTYNGLGSDGESQNSDDIYEFKEQHSTNRKPSTPVPCSCLQPLSQSPSFSLVDIKQKIASNAYVSLAEFNYDMSQVIQQSNCDELDIAYKELLSEQFPWFQNETKACTDALEEDMFESCGYEELKESPTTYAEHHTASQAPRTGLLDIPLDDVDDLGGCAVKTRLDTRVCLFCRKSGEGLSGEEARLLYCGHDCWVHINCAMWSAEVFEEIDGSLQNVHSAVARGRMIKCTVCGNRGATVGCNVKSCGEHYHYPCARTIDCAFLTDKSMYCPAHARNALKANGSPSVTYESNFEVSRPVYVELERKRKKLIVPAKVQFHIGSVAVRQLGSIVPRFSDSFEAIVPINFLCSRLYWSSKEPWKIVEYTVRTTIQNSYSSTLTLDAGRNFTVDHTNPNCSLVQLGLAQIARWHSSLARSDLLDTDWAEFPNSYVPADENTEEEPQQNADLLPPEIKDAIFEDLPHELLDGISMLDIFMYEDLGDKTELFAMSEQSKDGTTATSQAGGASVIICDEDTRNSNSLNKHLVLSNCCTASNPVDDAMLCAARSSSQEKECGDVLKKTDTAPTRSWPKLDGGSVAAFKRRKLSKNIAEGVLLSLNQRSKKEMATVAGITRRQSVCGSSELPAEGSATMRTKSFTWSAAKCLFEKNESREEPAKLTIMQMDGVDDSITEYRIIGSDGNLSTAQFTGQVKCERCQCTYRNYDSFQRHLGSCEPMSTSESESETATGTAQLSAESLNELQKQALAAATLSNTGGLNYLQTSFPQVQNLATLGQFGVQGLQGLQTLQLQPQSLGNGFFLSQPNAAQATSNGNDVLQLYANSLQNLAANLGGGFTLTQPTMSTQAQPQLIALSTNPDGTQQFIQLPQSNGATTQLLQTAAPLRCNATYQTLQATNSDKKIVLLFLEAGDPLQEVVTQAAQQATAAAHQKQLKSGHGVKPIQAKLQGQQQQQRHQQHQQHQQHQQQQQQQQQQQQQQQTPITVAQHGGTTQLLGQNLLQPQLLFQSNAQPQTQQLLLPQTQAQNIISFVTGDGSQNQPLQYISIPTTNDFKPQQTTSTPTFLTAPGGGATFLQTDASGNLMLTTAPANSGLQMLTGQLQTQPQVIGTLIQPQTLQLTTGADGTQTATAQQPLILGGATGGGTTGLEFATAPQVILATQPMYYGLETIVQNTVMSSQQFVSTAMPGVLSQNSSFSATTTQVFQASKIEPIVDLPAGYVVLNNAVDASGNTSWLQQSQTQATDDATAQLLQNAGFQFQTTPTTSTQQTMSTDYAPPLVVTAKVPPVAQMKRNTNANKSPISVLSKVQPQPQQSQVVNKVLPTNVIQQQQQQQQQQQQQQQQMQPKQQLAGNANLKLTSQFQRQQQANELKNKQAAGQQTGSTCGAPPSIASKPLQKKTNLIRPIHKVEVKPKIMKQAPKLATSAASMQHHQQQQSPAAINQVAKVALLQQRLAPAPQPQQQEPQEEQQHLHQQQQQQQQQQQHMQQHQQQQQQLSMPQLLRAQQPIISIVNTAEPQAATQFVIRPALQAQAQPIQLQEQQSQQQQQQPAEQLINGKAARLQRYASNSLPTNVVNPLQQQRCASANNSSNSNVTQQNSTITINSRPTNRVLPMQQRQEPTPLSNDVVVQSPTPPKPIEEPVPAGASTQKPIVKCYAQLEQKSPGYETELKTNITLDNLEQTNSITTMQLQQPQQGPIYGEQIFEKQSEAQVQLEKPKHNDLMLLEATSCQQQQQQQQHMEMVVDNGFQLTSNESCLLEKHGFNVEAVPMDTEDHYASMKNGSGGGAAEGIGQVDDAEEDEDDDDDFSLKMATSACNDHEMSDSEEPAVKEKISKILDNLTNDDCSDSIATATTVEASAGYQQMVEDVLATTAAGSVSTDDETFTATAEAVEAAASYINEMAEAHELQLKQLQAGVELDLKKPKLDVPQQQPDTVPPNVVPTAAAPQQPPPMRDPKKISGPHLLYEIQSEDGFTYKSSSIAEIWEKVFEAVQVARRAHGLTPLPEGPLADMSGVQMIGLKTNALKYLIEQLPGVEKCVKYTPKYHKRNGNVSTAAGGGHARTAGSNPAALAAGAESLIDYGSDQEELQENAYECARCEPYVSRSEYDMFSWLASRHRKQPIQVFVQPSDNELVPRRGTGSNLPMAMKYRTLKETYKDYVGVFRSHIHGRGLYCTKDIEAGEMVIEYAGELIRSTLTDKRERYYDSRGIGCYMFKIDDNLVVDATMRGNAARFINHSCEPNCYSKVVDILGHKHIIIFALRRIVQGEELTYDYKFPFEDEKIPCSCGSKRCRKYLN.

3 disordered regions span residues 25-179 (EDEA…AAAA), 356-390 (AVKS…ATKQ), and 512-589 (FRKQ…RSTR). A compositionally biased stretch (low complexity) spans 29–57 (ASAAAAAAAATAATTEQHQQSEQSAGSSA). The span at 77-89 (AATSGNRGASSGA) shows a compositional bias: polar residues. The segment covering 101–114 (GNGSSTGSKTTNGG) has biased composition (low complexity). Residues 152-165 (DGTEDTNNDDDDDS) show a composition bias toward acidic residues. Low complexity predominate over residues 359–387 (SSGSSPNPNHNPNAVAGSTSAAAPGAPTA). Residues 513-523 (RKQEPQHKTPE) show a composition bias toward basic and acidic residues. Positions 524–553 (DNDDDGSASSDAIEDDEDIDDDDAEENEEA) are enriched in acidic residues. The segment covering 554-581 (ASEKSAETTASVDEKEADDRQLVMDKHF) has biased composition (basic and acidic residues). The segment at residues 725–839 (ASTCAVCSAP…AGHRSRLSAI (115 aa)) is a DNA-binding region (nuclear receptor). Disordered stretches follow at residues 933-1036 (ESKE…SAVP), 1075-1094 (ELAA…TTSP), and 1131-1170 (AQPA…TTRN). Over residues 960 to 974 (AKQDKEKARELEAEK) the composition is skewed to basic and acidic residues. Low complexity-rich tracts occupy residues 998–1022 (ASTT…TNSS) and 1078–1094 (AAEA…TTSP). The segment covering 1140 to 1170 (ESRSSKSNTQTEAKKTPATSGSSKGKVTTRN) has biased composition (polar residues). 3 PHD-type zinc fingers span residues 1251-1334 (RALC…CTVC), 1335-1380 (YTCN…CLKC), and 1408-1469 (GNFC…CARR). Residues 1483 to 1644 (AVMEEFKSSL…SEQFPWFQNE (162 aa)) enclose the Bromo domain. Residues 1708-1748 (TRVCLFCRKSGEGLSGEEARLLYCGHDCWVHINCAMWSAEV) form a C2HC pre-PHD-type zinc finger. The PHD-type 4 zinc finger occupies 1769–1816 (IKCTVCGNRGATVGCNVKSCGEHYHYPCARTIDCAFLTDKSMYCPAHA). One can recognise an FYR N-terminal domain in the interval 1856 to 1913 (KVQFHIGSVAVRQLGSIVPRFSDSFEAIVPINFLCSRLYWSSKEPWKIVEYTVRTTIQ). Disordered regions lie at residues 2252–2272 (CEPM…AQLS), 2464–2510 (AHQK…QQQQ), 2826–2848 (RNTN…PQQS), 2897–2973 (RQQQ…SPAA), 2988–3031 (APAP…QLSM), 3117–3178 (ASAN…VPAG), 3314–3338 (NGSG…DDDD), and 3457–3487 (KLDV…PMRD). 3 stretches are compositionally biased toward low complexity: residues 2253 to 2268 (EPMS…ATGT), 2483 to 2510 (QGQQ…QQQQ), and 2836 to 2848 (SVLS…PQQS). A compositionally biased stretch (polar residues) spans 2897-2917 (RQQQANELKNKQAAGQQTGST). 4 stretches are compositionally biased toward low complexity: residues 2956 to 2973 (ATSA…SPAA), 2988 to 2997 (APAPQPQQQE), 3005 to 3031 (LHQQ…QLSM), and 3117 to 3132 (ASAN…QQNS). Polar residues predominate over residues 3148-3164 (QQRQEPTPLSNDVVVQS). The segment covering 3328–3338 (DDAEEDEDDDD) has biased composition (acidic residues). Residues 3493–3577 (GPHLLYEIQS…EKCVKYTPKY (85 aa)) enclose the FYR C-terminal domain. The 117-residue stretch at 3690–3806 (DYVGVFRSHI…QGEELTYDYK (117 aa)) folds into the SET domain. Residues His3700, Arg3702, Tyr3744, and 3767-3768 (NH) contribute to the S-adenosyl-L-methionine site. Zn(2+)-binding residues include Cys3770, Cys3816, Cys3818, and Cys3823. Positions 3812-3828 (EKIPCSCGSKRCRKYLN) constitute a Post-SET domain.

Belongs to the class V-like SAM-binding methyltransferase superfamily. Histone-lysine methyltransferase family. TRX/MLL subfamily. In terms of assembly, interacts with ash1 via its SET domain.

Its subcellular location is the nucleus. The catalysed reaction is L-lysyl(9)-[histone H3] + 3 S-adenosyl-L-methionine = N(6),N(6),N(6)-trimethyl-L-lysyl(9)-[histone H3] + 3 S-adenosyl-L-homocysteine + 3 H(+). Functionally, histone methyltransferase that methylates 'Lys-4' of histone H3 (H3K4me). H3K4me represents a specific tag for epigenetic transcriptional activation. Functions in segment determination through interaction with genes of bithorax (BX-C) and antennapedia (ANT-C) complexes. Acts as an activator of BX-C. Involved in the very early regulation of homeotic genes expressed only in the posterior region of the embryo. This chain is Histone-lysine N-methyltransferase trithorax (trx), found in Drosophila virilis (Fruit fly).